The chain runs to 3412 residues: Genome polyprotein (3412 aa).

The interval 2–15 (SKKPGKPGRNRVVN) is interaction with host EXOC1. Residues 2–108 (SKKPGKPGRN…PSKKRGGTRS (107 aa)) are Cytoplasmic-facing. The segment at 37–72 (LLDGRGPVRFILAILTFFRFTALQPTEALKRRWRAV) is hydrophobic; homodimerization of capsid protein C. A propeptide spans 104–121 (GGTRSLLGLAALIGLASS) (ER anchor for the capsid protein C, removed in mature form by serine protease NS3). A helical transmembrane segment spans residues 109-129 (LLGLAALIGLASSLQLSTYQG). At 130-247 (KVLMSINKTD…TTKYLTKVEN (118 aa)) the chain is on the extracellular side. An N-linked (GlcNAc...) asparagine; by host glycan is attached at Asn136. A helical membrane pass occupies residues 248–268 (WVLRNPGYALVALAIGWMLGS). The Cytoplasmic segment spans residues 269-273 (NNTQR). A helical membrane pass occupies residues 274-288 (VVFVIMLMLIAPAYS). The Extracellular segment spans residues 289-741 (FNCLGTSNRD…QVFGGAFRTL (453 aa)). 8 disulfides stabilise this stretch: Cys291-Cys318, Cys348-Cys404, Cys348-Cys409, Cys362-Cys393, Cys380-Cys404, Cys380-Cys409, Cys478-Cys576, and Cys593-Cys624. The tract at residues 386–399 (DRGWGNGCGLFGKG) is fusion peptide. A helical transmembrane segment spans residues 742-762 (FGGMSWITQGLLGALLLWMGL). The Cytoplasmic segment spans residues 763-768 (QARDRS). Residues 769–789 (ISLTLLAVGGILIFLATSVQA) traverse the membrane as a helical segment. At 790 to 1214 (DSGCAIDLQR…AFAEMNTGGD (425 aa)) the chain is on the extracellular side. Disulfide bonds link Cys793–Cys804 and Cys844–Cys932. N-linked (GlcNAc...) asparagine; by host glycans are attached at residues Asn919, Asn964, and Asn996. Cystine bridges form between Cys968–Cys1012, Cys1069–Cys1118, Cys1080–Cys1101, Cys1080–Cys1102, Cys1101–Cys1105, and Cys1102–Cys1105. A helical transmembrane segment spans residues 1215–1235 (VIHLALVAVFKVQPAFLAGLF). The Cytoplasmic portion of the chain corresponds to 1236 to 1245 (LRMQWSNQEN). Residues 1246-1266 (ILMVIGAAFLQMAANDLKLEV) form a helical membrane-spanning segment. At 1267-1288 (LPILNAMSIAWMLIRAMKEGKV) the chain is on the lumenal side. The helical transmembrane segment at 1289–1303 (AMYALPILCALTPGM) threads the bilayer. A topological domain (cytoplasmic) is located at residue Arg1304. A helical transmembrane segment spans residues 1305–1325 (MAGLDVIRCLLLIIGIVTLLN). The Lumenal segment spans residues 1326-1339 (ERRESVAKKKGGYL). A helical transmembrane segment spans residues 1340 to 1360 (LAAALCQAGVCSPLIMMGGLI). Residues 1361 to 1369 (LAHPNGKRS) are Cytoplasmic-facing. Residues 1370–1390 (WPASEVLTGVGLMCALAGGLL) form a helical membrane-spanning segment. The Lumenal portion of the chain corresponds to 1391–1393 (EFE). Residues 1394 to 1414 (ETSMVVPFAIAGLMYITYTVS) form a helical membrane-spanning segment. Residues 1415–1471 (GKAAEMWIEKAADITWEQNAEITGTSPRLDVDLDSHGNFKLLNDPGAPVHLFALRFI) are Cytoplasmic-facing. Residues 1422 to 1461 (IEKAADITWEQNAEITGTSPRLDVDLDSHGNFKLLNDPGA) are interacts with and activates NS3 protease. Residues 1472 to 1492 (LLGLSARFHWFIPFGVLGFWL) constitute an intramembrane region (helical). Topologically, residues 1493 to 2167 (LGKHSKRGGA…KEALAELPDS (675 aa)) are cytoplasmic. In terms of domain architecture, Peptidase S7 spans 1500 to 1677 (GGALWDVPSP…ERTEEPIPDA (178 aa)). Catalysis depends on charge relay system; for serine protease NS3 activity residues His1550, Asp1574, and Ser1634. A Helicase ATP-binding domain is found at 1680-1836 (EEMLRKRKLT…DSNSPILDVE (157 aa)). The important for RNA-binding stretch occupies residues 1684–1687 (RKRK). 1693–1700 (LHPGAGKT) is an ATP binding site. The DEAH box motif lies at 1784–1787 (DEAH). The Helicase C-terminal domain maps to 1847–2011 (GYEWITNFTG…GLVAQMYQPE (165 aa)). The tract at residues 2162–2166 (AELPD) is regulates the ATPase activity of NS3 helicase. A helical transmembrane segment spans residues 2168-2188 (LETLLLIGMLCVMSMGTFIFL). Over 2189–2193 (MNRKG) the chain is Lumenal. Residues 2194–2214 (VGKMGLGAFVMTLATALLWAA) constitute an intramembrane region (helical). Glu2215 is a topological domain (lumenal). Residues 2216–2236 (VPGTQIAGVLLIVFLLMIVLI) traverse the membrane as a helical segment. The Cytoplasmic segment spans residues 2237–2251 (PEPEKQRSQTDNQLA). A helical membrane pass occupies residues 2252-2266 (VFLICIMTLMGVVAA). The Lumenal portion of the chain corresponds to 2267–2308 (NEMGLLEKTKSDIAKLFGSQPGSVGFATRTTPWDISLDIKPA). Positions 2309-2329 (TAWALYAAATMVMTPLIKHLI) form an intramembrane region, helical. The Lumenal portion of the chain corresponds to 2330–2376 (TTQYVNFSLTAIASQAGVLLGLTNGMPFTAMDLSVPLLVLGCWNQMT). A helical transmembrane segment spans residues 2377 to 2397 (LPSLAVAVMLLAIHYAFMIPG). The Cytoplasmic segment spans residues 2398–2440 (WQAEAMRAAQRRTAAGIMKNAVVDGIVATDIPDLSPATPMTEK). A helical transmembrane segment spans residues 2441 to 2461 (KMGQILLIAAAVLAVLVRPGI). The Lumenal portion of the chain corresponds to 2462–2466 (CSIKE). The chain crosses the membrane as a helical span at residues 2467–2487 (FGVLGSAALVTLIEGTAGVVW). Residues 2488–3412 (NCTTAVGLCN…IGEEEYRDYM (925 aa)) are Cytoplasmic-facing. One can recognise an mRNA cap 0-1 NS5-type MT domain in the interval 2525–2790 (GGGKGATLGE…DVNLGSGTRS (266 aa)). Residue Ser2580 participates in S-adenosyl-L-methionine binding. Position 2580 is a phosphoserine (Ser2580). The active-site For 2'-O-MTase activity is the Lys2585. 6 residues coordinate S-adenosyl-L-methionine: Gly2610, Trp2611, Thr2628, Lys2629, Asp2655, and Val2656. The active-site For 2'-O-MTase activity is the Asp2670. Ile2671 provides a ligand contact to S-adenosyl-L-methionine. Catalysis depends on for 2'-O-MTase activity residues Lys2706 and Glu2742. S-adenosyl-L-methionine is bound at residue Tyr2744. The segment covering 2771 to 2780 (QNRSGPRYEE) has biased composition (basic and acidic residues). The segment at 2771 to 2791 (QNRSGPRYEEDVNLGSGTRSV) is disordered. Positions 2964, 2968, 2973, and 2976 each coordinate Zn(2+). The region spanning 3054–3206 (GKMYADDTAG…KPIDDRFATA (153 aa)) is the RdRp catalytic domain. Zn(2+) contacts are provided by His3241, Cys3257, and Cys3376.

In the N-terminal section; belongs to the class I-like SAM-binding methyltransferase superfamily. mRNA cap 0-1 NS5-type methyltransferase family. Homodimer. Interacts (via N-terminus) with host EXOC1 (via C-terminus); this interaction results in EXOC1 degradation through the proteasome degradation pathway. As to quaternary structure, forms heterodimers with envelope protein E in the endoplasmic reticulum and Golgi. In terms of assembly, homodimer; in the endoplasmic reticulum and Golgi. Interacts with protein prM. Interacts with non-structural protein 1. Homodimer; Homohexamer when secreted. Interacts with envelope protein E. NS1 interacts with NS4B. Interacts with host complement protein CFH; this interaction leads to the degradation of C3. As to quaternary structure, interacts (via N-terminus) with serine protease NS3. In terms of assembly, forms a heterodimer with serine protease NS3. May form homooligomers. Forms a heterodimer with NS2B. Interacts with non-structural protein 2A (via N-terminus). Interacts with NS4B. Interacts with unphosphorylated RNA-directed RNA polymerase NS5; this interaction stimulates RNA-directed RNA polymerase NS5 guanylyltransferase activity. As to quaternary structure, interacts with serine protease NS3. In terms of assembly, homodimer. Interacts with host STAT2; this interaction inhibits the phosphorylation of the latter, and, when all viral proteins are present (polyprotein), targets STAT2 for degradation. Interacts with serine protease NS3. In terms of processing, specific enzymatic cleavages in vivo yield mature proteins. Cleavages in the lumen of endoplasmic reticulum are performed by host signal peptidase, whereas cleavages in the cytoplasmic side are performed by serine protease NS3. Signal cleavage at the 2K-4B site requires a prior NS3 protease-mediated cleavage at the 4A-2K site. Post-translationally, cleaved in post-Golgi vesicles by a host furin, releasing the mature small envelope protein M, and peptide pr. This cleavage is incomplete as up to 30% of viral particles still carry uncleaved prM. N-glycosylated. In terms of processing, N-glycosylated. The excreted form is glycosylated and this is required for efficient secretion of the protein from infected cells. Post-translationally, phosphorylated on serines residues. This phosphorylation may trigger NS5 nuclear localization.

It is found in the virion. The protein resides in the host nucleus. The protein localises to the host cytoplasm. It localises to the host perinuclear region. Its subcellular location is the secreted. It is found in the virion membrane. The protein resides in the host endoplasmic reticulum membrane. It catalyses the reaction Selective hydrolysis of -Xaa-Xaa-|-Yaa- bonds in which each of the Xaa can be either Arg or Lys and Yaa can be either Ser or Ala.. The catalysed reaction is RNA(n) + a ribonucleoside 5'-triphosphate = RNA(n+1) + diphosphate. It carries out the reaction a ribonucleoside 5'-triphosphate + H2O = a ribonucleoside 5'-diphosphate + phosphate + H(+). The enzyme catalyses ATP + H2O = ADP + phosphate + H(+). It catalyses the reaction a 5'-end (5'-triphosphoguanosine)-ribonucleoside in mRNA + S-adenosyl-L-methionine = a 5'-end (N(7)-methyl 5'-triphosphoguanosine)-ribonucleoside in mRNA + S-adenosyl-L-homocysteine. The catalysed reaction is a 5'-end (N(7)-methyl 5'-triphosphoguanosine)-ribonucleoside in mRNA + S-adenosyl-L-methionine = a 5'-end (N(7)-methyl 5'-triphosphoguanosine)-(2'-O-methyl-ribonucleoside) in mRNA + S-adenosyl-L-homocysteine + H(+). Plays a role in virus budding by binding to the cell membrane and gathering the viral RNA into a nucleocapsid that forms the core of a mature virus particle. During virus entry, may induce genome penetration into the host cytoplasm after hemifusion induced by the surface proteins. Can migrate to the cell nucleus where it modulates host functions. Overcomes the anti-viral effects of host EXOC1 by sequestering and degrading the latter through the proteasome degradation pathway. In terms of biological role, inhibits RNA silencing by interfering with host Dicer. Its function is as follows. Prevents premature fusion activity of envelope proteins in trans-Golgi by binding to envelope protein E at pH6.0. After virion release in extracellular space, gets dissociated from E dimers. Functionally, acts as a chaperone for envelope protein E during intracellular virion assembly by masking and inactivating envelope protein E fusion peptide. prM is the only viral peptide matured by host furin in the trans-Golgi network probably to avoid catastrophic activation of the viral fusion activity in acidic Golgi compartment prior to virion release. prM-E cleavage is inefficient, and many virions are only partially matured. These uncleaved prM would play a role in immune evasion. May play a role in virus budding. Exerts cytotoxic effects by activating a mitochondrial apoptotic pathway through M ectodomain. May display a viroporin activity. In terms of biological role, binds to host cell surface receptor and mediates fusion between viral and cellular membranes. Envelope protein is synthesized in the endoplasmic reticulum in the form of heterodimer with protein prM. They play a role in virion budding in the ER, and the newly formed immature particle is covered with 60 spikes composed of heterodimer between precursor prM and envelope protein E. The virion is transported to the Golgi apparatus where the low pH causes dissociation of PrM-E heterodimers and formation of E homodimers. prM-E cleavage is inefficient, and many virions are only partially matured. These uncleaved prM would play a role in immune evasion. Its function is as follows. Involved in immune evasion, pathogenesis and viral replication. Once cleaved off the polyprotein, is targeted to three destinations: the viral replication cycle, the plasma membrane and the extracellular compartment. Essential for viral replication. Required for formation of the replication complex and recruitment of other non-structural proteins to the ER-derived membrane structures. Excreted as a hexameric lipoparticle that plays a role against host immune response. Antagonizing the complement function. Binds to the host macrophages and dendritic cells. Inhibits signal transduction originating from Toll-like receptor 3 (TLR3). Functionally, component of the viral RNA replication complex that functions in virion assembly and antagonizes the host alpha/beta interferon antiviral response. Required cofactor for the serine protease function of NS3. May have membrane-destabilizing activity and form viroporins. In terms of biological role, displays three enzymatic activities: serine protease, NTPase and RNA helicase. NS3 serine protease, in association with NS2B, performs its autocleavage and cleaves the polyprotein at dibasic sites in the cytoplasm: C-prM, NS2A-NS2B, NS2B-NS3, NS3-NS4A, NS4A-2K and NS4B-NS5. NS3 RNA helicase binds RNA and unwinds dsRNA in the 3' to 5' direction. Its function is as follows. Regulates the ATPase activity of the NS3 helicase activity. NS4A allows NS3 helicase to conserve energy during unwinding. Functionally, functions as a signal peptide for NS4B and is required for the interferon antagonism activity of the latter. Induces the formation of ER-derived membrane vesicles where the viral replication takes place. Inhibits interferon (IFN)-induced host STAT1 phosphorylation and nuclear translocation, thereby preventing the establishment of cellular antiviral state by blocking the IFN-alpha/beta pathway. Inhibits STAT2 translocation in the nucleus after IFN-alpha treatment. In terms of biological role, replicates the viral (+) and (-) RNA genome, and performs the capping of genomes in the cytoplasm. NS5 methylates viral RNA cap at guanine N-7 and ribose 2'-O positions. Besides its role in RNA genome replication, also prevents the establishment of cellular antiviral state by blocking the interferon-alpha/beta (IFN-alpha/beta) signaling pathway. Inhibits host TYK2 and STAT2 phosphorylation, thereby preventing activation of JAK-STAT signaling pathway. The sequence is that of Genome polyprotein from Agelaius tricolor (Tricolored blackbird).